Consider the following 417-residue polypeptide: NADH-quinone oxidoreductase subunit D (417 aa).

The protein belongs to the complex I 49 kDa subunit family. As to quaternary structure, NDH-1 is composed of 14 different subunits. Subunits NuoB, C, D, E, F, and G constitute the peripheral sector of the complex.

The protein localises to the cell inner membrane. It carries out the reaction a quinone + NADH + 5 H(+)(in) = a quinol + NAD(+) + 4 H(+)(out). In terms of biological role, NDH-1 shuttles electrons from NADH, via FMN and iron-sulfur (Fe-S) centers, to quinones in the respiratory chain. The immediate electron acceptor for the enzyme in this species is believed to be ubiquinone. Couples the redox reaction to proton translocation (for every two electrons transferred, four hydrogen ions are translocated across the cytoplasmic membrane), and thus conserves the redox energy in a proton gradient. In Burkholderia lata (strain ATCC 17760 / DSM 23089 / LMG 22485 / NCIMB 9086 / R18194 / 383), this protein is NADH-quinone oxidoreductase subunit D.